Consider the following 264-residue polypeptide: 3-methyl-2-oxobutanoate hydroxymethyltransferase (264 aa).

Mg(2+) contacts are provided by Asp-44 and Asp-83. Residues 44 to 45 (DS), Asp-83, and Lys-111 contribute to the 3-methyl-2-oxobutanoate site. Glu-113 serves as a coordination point for Mg(2+). The active-site Proton acceptor is Glu-180.

This sequence belongs to the PanB family. Homodecamer; pentamer of dimers. Mg(2+) is required as a cofactor.

The protein resides in the cytoplasm. The catalysed reaction is 3-methyl-2-oxobutanoate + (6R)-5,10-methylene-5,6,7,8-tetrahydrofolate + H2O = 2-dehydropantoate + (6S)-5,6,7,8-tetrahydrofolate. It functions in the pathway cofactor biosynthesis; (R)-pantothenate biosynthesis; (R)-pantoate from 3-methyl-2-oxobutanoate: step 1/2. Its function is as follows. Catalyzes the reversible reaction in which hydroxymethyl group from 5,10-methylenetetrahydrofolate is transferred onto alpha-ketoisovalerate to form ketopantoate. This is 3-methyl-2-oxobutanoate hydroxymethyltransferase from Marinobacter nauticus (strain ATCC 700491 / DSM 11845 / VT8) (Marinobacter aquaeolei).